We begin with the raw amino-acid sequence, 412 residues long: Putative competence-damage inducible protein (412 aa).

The protein belongs to the CinA family.

The chain is Putative competence-damage inducible protein from Bacillus cereus (strain Q1).